The sequence spans 319 residues: Lipoyl synthase (319 aa).

Residues 5-31 (LDTISANPVRPRHPEKANRPDALSPPK) form a disordered region. Residues Cys-61, Cys-66, Cys-72, Cys-87, Cys-91, Cys-94, and Ser-300 each contribute to the [4Fe-4S] cluster site. In terms of domain architecture, Radical SAM core spans 73–289 (WDKKHATFMI…ETVAYTKGFL (217 aa)).

The protein belongs to the radical SAM superfamily. Lipoyl synthase family. [4Fe-4S] cluster serves as cofactor.

Its subcellular location is the cytoplasm. It catalyses the reaction [[Fe-S] cluster scaffold protein carrying a second [4Fe-4S](2+) cluster] + N(6)-octanoyl-L-lysyl-[protein] + 2 oxidized [2Fe-2S]-[ferredoxin] + 2 S-adenosyl-L-methionine + 4 H(+) = [[Fe-S] cluster scaffold protein] + N(6)-[(R)-dihydrolipoyl]-L-lysyl-[protein] + 4 Fe(3+) + 2 hydrogen sulfide + 2 5'-deoxyadenosine + 2 L-methionine + 2 reduced [2Fe-2S]-[ferredoxin]. It participates in protein modification; protein lipoylation via endogenous pathway; protein N(6)-(lipoyl)lysine from octanoyl-[acyl-carrier-protein]: step 2/2. Its function is as follows. Catalyzes the radical-mediated insertion of two sulfur atoms into the C-6 and C-8 positions of the octanoyl moiety bound to the lipoyl domains of lipoate-dependent enzymes, thereby converting the octanoylated domains into lipoylated derivatives. The chain is Lipoyl synthase from Nitrobacter winogradskyi (strain ATCC 25391 / DSM 10237 / CIP 104748 / NCIMB 11846 / Nb-255).